The primary structure comprises 154 residues: UPF0178 protein Glov_0658 (154 aa).

It belongs to the UPF0178 family.

The polypeptide is UPF0178 protein Glov_0658 (Trichlorobacter lovleyi (strain ATCC BAA-1151 / DSM 17278 / SZ) (Geobacter lovleyi)).